A 409-amino-acid polypeptide reads, in one-letter code: Phosphatidylserine decarboxylase proenzyme, mitochondrial (409 aa).

The transit peptide at 1–52 (MATSVGHRCLGLLHGVAPWRSSLHPCEITALSQSLQPLRKLPFRAFRTDARK) directs the protein to the mitochondrion. The Mitochondrial matrix segment spans residues 53–63 (IHTAPARTMFL). A helical membrane pass occupies residues 64–82 (LRPVPILLATGGGYAGYRQ). The Mitochondrial intermembrane segment spans residues 83-409 (YEKYRERELE…IRFGEALGSL (327 aa)). Catalysis depends on charge relay system; for autoendoproteolytic cleavage activity residues Asp-191, His-267, and Ser-378. Residue Ser-378 is the Schiff-base intermediate with substrate; via pyruvic acid; for decarboxylase activity of the active site. Ser-378 is modified (pyruvic acid (Ser); by autocatalysis).

It belongs to the phosphatidylserine decarboxylase family. PSD-B subfamily. Eukaryotic type I sub-subfamily. As to quaternary structure, heterodimer of a large membrane-associated beta subunit and a small pyruvoyl-containing alpha subunit. Requires pyruvate as cofactor. Post-translationally, is synthesized initially as an inactive proenzyme. Formation of the active enzyme involves a self-maturation process in which the active site pyruvoyl group is generated from an internal serine residue via an autocatalytic post-translational modification. Two non-identical subunits are generated from the proenzyme in this reaction, and the pyruvate is formed at the N-terminus of the alpha chain, which is derived from the carboxyl end of the proenzyme. The autoendoproteolytic cleavage occurs by a canonical serine protease mechanism, in which the side chain hydroxyl group of the serine supplies its oxygen atom to form the C-terminus of the beta chain, while the remainder of the serine residue undergoes an oxidative deamination to produce ammonia and the pyruvoyl prosthetic group on the alpha chain. During this reaction, the Ser that is part of the protease active site of the proenzyme becomes the pyruvoyl prosthetic group, which constitutes an essential element of the active site of the mature decarboxylase.

Its subcellular location is the mitochondrion inner membrane. It is found in the lipid droplet. The protein localises to the cytoplasm. It carries out the reaction a 1,2-diacyl-sn-glycero-3-phospho-L-serine + H(+) = a 1,2-diacyl-sn-glycero-3-phosphoethanolamine + CO2. It functions in the pathway phospholipid metabolism; phosphatidylethanolamine biosynthesis. Catalyzes the formation of phosphatidylethanolamine (PtdEtn) from phosphatidylserine (PtdSer). Plays a central role in phospholipid metabolism and in the interorganelle trafficking of phosphatidylserine. May be involved in lipid droplet biogenesis at the endoplasmic reticulum membrane. This chain is Phosphatidylserine decarboxylase proenzyme, mitochondrial, found in Pongo abelii (Sumatran orangutan).